The following is a 302-amino-acid chain: MTEIEQAYRITESITRTAARNFYYGIRLLPREKRAALSAVYALGRRIDDVADGELAPETKITELDAIRKSLDNIDDSSDPVLVALADAARRFPVPIAMFAELIDGARMEIDWTGCRDFDELIVYCRRGAGTIGKLCLSIFGPVSTATSRYAEQLGIALQQTNILRDVREDFLNGRIYLPRDELDRLGVRLRLDDTGALDDPDGRLAALLRFSADRAADWYSLGLRLIPHLDRRSAACCAAMSGIYRRQLALIRASPAVVYDRRISLSGLKKAQVAAAALASSVTCGPAHGPLPADLGSHPSH.

This sequence belongs to the phytoene/squalene synthase family. The cofactor is ATP. Requires Mn(2+) as cofactor. It depends on Mg(2+) as a cofactor.

It participates in carotenoid biosynthesis; phytoene biosynthesis. In terms of biological role, involved in the biosynthesis of carotenoids. Catalyzes the condensation of two molecules of geranylgeranyl diphosphate (GGPP) to give prephytoene diphosphate (PPPP) and the subsequent rearrangement of the cyclopropylcarbinyl intermediate to yield phytoene. This is Phytoene synthase (crtB) from Mycobacterium bovis (strain ATCC BAA-935 / AF2122/97).